Reading from the N-terminus, the 546-residue chain is ATP synthase subunit alpha (546 aa).

Residue 172-179 (GDRKTGKT) participates in ATP binding.

Belongs to the ATPase alpha/beta chains family. In terms of assembly, F-type ATPases have 2 components, CF(1) - the catalytic core - and CF(0) - the membrane proton channel. CF(1) has five subunits: alpha(3), beta(3), gamma(1), delta(1), epsilon(1). CF(0) has three main subunits: a(1), b(2) and c(9-12). The alpha and beta chains form an alternating ring which encloses part of the gamma chain. CF(1) is attached to CF(0) by a central stalk formed by the gamma and epsilon chains, while a peripheral stalk is formed by the delta and b chains.

Its subcellular location is the cell membrane. The enzyme catalyses ATP + H2O + 4 H(+)(in) = ADP + phosphate + 5 H(+)(out). Its function is as follows. Produces ATP from ADP in the presence of a proton gradient across the membrane. The alpha chain is a regulatory subunit. The chain is ATP synthase subunit alpha from Corynebacterium efficiens (strain DSM 44549 / YS-314 / AJ 12310 / JCM 11189 / NBRC 100395).